The sequence spans 148 residues: 3-dehydroquinate dehydratase (148 aa).

The active-site Proton acceptor is Y26. 3 residues coordinate substrate: N77, H83, and D90. Catalysis depends on H103, which acts as the Proton donor. Substrate-binding positions include 104-105 (LS) and R114.

This sequence belongs to the type-II 3-dehydroquinase family. In terms of assembly, homododecamer.

The catalysed reaction is 3-dehydroquinate = 3-dehydroshikimate + H2O. The protein operates within metabolic intermediate biosynthesis; chorismate biosynthesis; chorismate from D-erythrose 4-phosphate and phosphoenolpyruvate: step 3/7. Its function is as follows. Catalyzes a trans-dehydration via an enolate intermediate. This is 3-dehydroquinate dehydratase (aroQ) from Pasteurella multocida (strain Pm70).